The chain runs to 1273 residues: DNA-directed RNA polymerase subunit beta (1273 aa).

Belongs to the RNA polymerase beta chain family. The RNAP catalytic core consists of 2 alpha, 1 beta, 1 beta' and 1 omega subunit. When a sigma factor is associated with the core the holoenzyme is formed, which can initiate transcription.

It catalyses the reaction RNA(n) + a ribonucleoside 5'-triphosphate = RNA(n+1) + diphosphate. Its function is as follows. DNA-dependent RNA polymerase catalyzes the transcription of DNA into RNA using the four ribonucleoside triphosphates as substrates. This Aster yellows witches'-broom phytoplasma (strain AYWB) protein is DNA-directed RNA polymerase subunit beta.